The following is a 223-amino-acid chain: Large ribosomal subunit protein uL4 (223 aa).

Residues 47–72 (GTASTKTRGEVAGGGRKPWPQKHTGR) form a disordered region.

This sequence belongs to the universal ribosomal protein uL4 family. In terms of assembly, part of the 50S ribosomal subunit.

One of the primary rRNA binding proteins, this protein initially binds near the 5'-end of the 23S rRNA. It is important during the early stages of 50S assembly. It makes multiple contacts with different domains of the 23S rRNA in the assembled 50S subunit and ribosome. Functionally, forms part of the polypeptide exit tunnel. The sequence is that of Large ribosomal subunit protein uL4 from Fervidobacterium nodosum (strain ATCC 35602 / DSM 5306 / Rt17-B1).